A 390-amino-acid polypeptide reads, in one-letter code: Nuclear receptor subfamily 2 group F member 6 (390 aa).

The span at 1–15 shows a compositional bias: gly residues; that stretch reads MAMVTGGWGDPGGDT. The disordered stretch occupies residues 1 to 50; the sequence is MAMVTGGWGDPGGDTNGVDKAGGSYPRATEDDSASPPGATSDAEPGDEER. 2 positions are modified to phosphoserine: S35 and S41. Residues 54 to 129 constitute a DNA-binding region (nuclear receptor); it reads QVDCVVCGDK…VGMRKEAVQR (76 aa). The NR C4-type zinc finger occupies 57 to 77; that stretch reads CVVCGDKSSGKHYGVFTCEGC. Residue S84 is modified to Phosphoserine. The NR C4-type zinc-finger motif lies at 93–117; that stretch reads CRSNRDCQIDQHHRNQCQYCRLKKC. The region spanning 157-380 is the NR LBD domain; that stretch reads PVSELIAQLL…TLIRDMLLSG (224 aa). The interval 314 to 390 is important for dimerization; it reads LQEKAQVALT…STFNWPYGSG (77 aa).

It belongs to the nuclear hormone receptor family. NR2 subfamily. As to quaternary structure, binds DNA as dimer; homodimer and heterodimer with NR2F2 and probably NR2F1. Interacts with THRB.

It localises to the nucleus. Functionally, transcription factor predominantly involved in transcriptional repression. Binds to promoter/enhancer response elements that contain the imperfect 5'-AGGTCA-3' direct or inverted repeats with various spacings which are also recognized by other nuclear hormone receptors. Involved in modulation of hormonal responses. Represses transcriptional activity of the lutropin-choriogonadotropic hormone receptor/LHCGR gene, the renin/REN gene and the oxytocin-neurophysin/OXT gene. Represses the triiodothyronine-dependent and -independent transcriptional activity of the thyroid hormone receptor gene in a cell type-specific manner. The corepressing function towards thyroid hormone receptor beta/THRB involves at least in part the inhibition of THRB binding to triiodothyronine response elements (TREs) by NR2F6. Inhibits NFATC transcription factor DNA binding and subsequently its transcriptional activity. Acts as transcriptional repressor of IL-17 expression in Th-17 differentiated CD4(+) T cells and may be involved in induction and/or maintenance of peripheral immunological tolerance and autoimmunity. Involved in development of forebrain circadian clock; is required early in the development of the locus coeruleus (LC). The polypeptide is Nuclear receptor subfamily 2 group F member 6 (Nr2f6) (Mus musculus (Mouse)).